Here is a 141-residue protein sequence, read N- to C-terminus: Organic hydroperoxide resistance protein OhrA (141 aa).

It belongs to the OsmC/Ohr family.

Its function is as follows. Involved in organic hydroperoxide resistance. The protein is Organic hydroperoxide resistance protein OhrA (ohrA) of Bacillus subtilis (strain 168).